The primary structure comprises 183 residues: Large ribosomal subunit protein uL18 (183 aa).

This sequence belongs to the universal ribosomal protein uL18 family. In terms of assembly, part of the 50S ribosomal subunit. Contacts the 5S and 23S rRNAs.

Functionally, this is one of the proteins that bind and probably mediate the attachment of the 5S RNA into the large ribosomal subunit, where it forms part of the central protuberance. This Halobacterium salinarum (strain ATCC 29341 / DSM 671 / R1) protein is Large ribosomal subunit protein uL18.